Consider the following 85-residue polypeptide: Major outer membrane protein 1 (85 aa).

The first 18 residues, M1–G18, serve as a signal peptide directing secretion. The helical transmembrane segment at Y22–L42 threads the bilayer.

In terms of assembly, forms extremely stable complexes with apparent masses of 150, 50, 45 and 38 kDa. Found in a ring-shaped complex of 7 nm diameter with a 2 nm channel through the middle. Complete denaturation requires temperatures over 110 degrees Celsius.

It localises to the cell outer membrane. In terms of biological role, the most abundant protein of the outer membrane, it forms a pore through it. This is Major outer membrane protein 1 (ihomp1) from Ignicoccus hospitalis (strain KIN4/I / DSM 18386 / JCM 14125).